The primary structure comprises 113 residues: Nitrogenase-stabilizing/protective protein NifW (113 aa).

This sequence belongs to the NifW family. In terms of assembly, homotrimer; associates with NifD.

In terms of biological role, may protect the nitrogenase Fe-Mo protein from oxidative damage. The protein is Nitrogenase-stabilizing/protective protein NifW of Dechloromonas aromatica (strain RCB).